The following is a 462-amino-acid chain: MLDFAIFAVTFLLALVGAVLYLYPASRQASGIPGLTPTEEKDGNLPDIVNSGSLHEFLVNLHERYGPVVSFWFGRRLVVSLGTTDVLKQHFNPNKTSDPFETMLKSLLGYQSGGGSAGEDHVRRKLYGDAVTASLHSNFPLLLQLSEELLDKWLSYPETQHIPLSQHMLGFALKFVTRMVLGSTFEDEQEVIRFQKIHGTVWSEIGKGFLDGSLDKNTTRKKQYQEALMQLESTLKKIIKERKGGNFRQHTFIDSLTQGKLNEQQILEDCVVFSLASCIITARLCTWTIHFLTTTGEVQKKLCKEIDQVLGEGPITSEKIEQLSYCQQVLFETVRTAKLTPVSARLQDIEGKVGPFVIPKETLVLYALGVVLQDPSTWPLPHRFDPDRFADEPVMKVFSSLGFSGTWECPELRFAYMVTAVLVSVLLKRLRLLAVDRQVFEMKYELVTSAREEAWITVSKRH.

The chain crosses the membrane as a helical span at residues 4–24 (FAIFAVTFLLALVGAVLYLYP). Cysteine 409 contributes to the heme binding site.

Belongs to the cytochrome P450 family. Heme serves as cofactor.

Its subcellular location is the membrane. The protein is Cytochrome P450 20A1 (Cyp20a1) of Mus musculus (Mouse).